Consider the following 475-residue polypeptide: Arginine/ornithine antiporter (475 aa).

12 helical membrane passes run Ile10–Gly30, Gly42–Leu62, Gly74–Gly94, Leu101–Phe121, Leu157–Phe177, Asn205–Ala225, Ile238–Tyr258, Trp283–Trp303, Pro333–Phe353, Ala361–Ile381, Leu397–Ser417, and Trp451–Gly471.

This sequence belongs to the amino acid-polyamine-organocation (APC) superfamily. Basic amino acid/polyamine antiporter (APA) (TC 2.A.3.2) family.

The protein localises to the cell membrane. It carries out the reaction L-ornithine(in) + L-arginine(out) = L-ornithine(out) + L-arginine(in). Catalyzes electroneutral exchange between L-arginine and L-ornithine. The protein is Arginine/ornithine antiporter (arcD) of Latilactobacillus sakei (Lactobacillus sakei).